Consider the following 110-residue polypeptide: Large ribosomal subunit protein uL23c (110 aa).

This sequence belongs to the universal ribosomal protein uL23 family. In terms of assembly, part of the 50S ribosomal subunit.

It localises to the plastid. The protein localises to the chloroplast. Binds to 23S rRNA. The protein is Large ribosomal subunit protein uL23c (rpl23) of Porphyra purpurea (Red seaweed).